The chain runs to 300 residues: Glucose and ribitol dehydrogenase homolog (300 aa).

The segment covering 1–14 has biased composition (polar residues); it reads MASQQFPPQNQETQ. The segment at 1-23 is disordered; sequence MASQQFPPQNQETQPGKEHAMDP. Residue 44–68 participates in NAD(+) binding; it reads IVTGGDSGIGRAVCLCFALEGATVA. Residue S192 coordinates substrate. The Proton acceptor role is filled by Y205.

It belongs to the short-chain dehydrogenases/reductases (SDR) family.

May act as a short alcohol-polyol-sugar dehydrogenase possibly related to carbohydrate metabolism and the acquisition of desiccation tolerance. May also be involved in signal transduction. This chain is Glucose and ribitol dehydrogenase homolog, found in Oryza sativa subsp. japonica (Rice).